Reading from the N-terminus, the 484-residue chain is Probable peptide/nitrate transporter At3g43790 (484 aa).

Transmembrane regions (helical) follow at residues 39-59 (FIWL…PYIY), 76-96 (FYAG…SIFW), 107-127 (PIIL…GLST), 129-149 (FWLA…LGVI), 168-188 (VVST…GYLA), 210-230 (FLPS…CWWL), 278-298 (MAII…NEIF), 318-338 (VGEV…LVYP), 355-375 (VLLI…GVTL), 381-401 (CASI…FIML), 416-436 (ISMT…GVLF), and 460-480 (VFLV…IPYI).

The protein belongs to the major facilitator superfamily.

It localises to the membrane. In Arabidopsis thaliana (Mouse-ear cress), this protein is Probable peptide/nitrate transporter At3g43790 (ZIFL2).